Consider the following 309-residue polypeptide: UDP-N-acetylenolpyruvoylglucosamine reductase (309 aa).

The 188-residue stretch at 34–221 (RVGGPAQVLF…TAAREAAQPI (188 aa)) folds into the FAD-binding PCMH-type domain. Arg-179 is a catalytic residue. Residue Ser-228 is the Proton donor of the active site. Glu-298 is an active-site residue.

It belongs to the MurB family. Requires FAD as cofactor.

It localises to the cytoplasm. The catalysed reaction is UDP-N-acetyl-alpha-D-muramate + NADP(+) = UDP-N-acetyl-3-O-(1-carboxyvinyl)-alpha-D-glucosamine + NADPH + H(+). It participates in cell wall biogenesis; peptidoglycan biosynthesis. Its function is as follows. Cell wall formation. This is UDP-N-acetylenolpyruvoylglucosamine reductase from Methylorubrum populi (strain ATCC BAA-705 / NCIMB 13946 / BJ001) (Methylobacterium populi).